Here is a 224-residue protein sequence, read N- to C-terminus: MELIGHGHSCIEIRLNDGTNLLFDPFINGNPLADVSLADLHPDYILITHGHSDHIGDMLAIAQANKATIIAIAEVAMYAQSQGVKAHGMNLGGRYVFPFGSVKFVPALHSSGYEIDGVMTYMGEASGIILEAEDKKIYHAGDTALFSDMRLFAKDKSIDVAFLPIGDNYTMGPEDALEAIAYLNPEITIPIHYNTFPVIQQNPAIFVEQVVGGKVLNPGETILV.

Belongs to the UPF0173 family.

This Enterococcus faecalis (strain ATCC 700802 / V583) protein is UPF0173 metal-dependent hydrolase EF_1371.